The primary structure comprises 322 residues: NADH-quinone oxidoreductase subunit H (322 aa).

The next 8 membrane-spanning stretches (helical) occupy residues 15-35 (IFQS…MSVV), 81-101 (ITFL…ITII), 114-134 (IGVL…LLAG), 149-169 (ATAQ…GVVA), 184-204 (IGLW…IAGL), 237-257 (FFIG…TMFF), 265-285 (FPSY…FILI), and 299-319 (LFGW…TALI).

This sequence belongs to the complex I subunit 1 family. In terms of assembly, NDH-1 is composed of 13 different subunits. Subunits NuoA, H, J, K, L, M, N constitute the membrane sector of the complex.

The protein resides in the cell membrane. It carries out the reaction a quinone + NADH + 5 H(+)(in) = a quinol + NAD(+) + 4 H(+)(out). Functionally, NDH-1 shuttles electrons from NADH, via FMN and iron-sulfur (Fe-S) centers, to quinones in the respiratory chain. The immediate electron acceptor for the enzyme in this species is believed to be ubiquinone. Couples the redox reaction to proton translocation (for every two electrons transferred, four hydrogen ions are translocated across the cytoplasmic membrane), and thus conserves the redox energy in a proton gradient. This subunit may bind ubiquinone. The chain is NADH-quinone oxidoreductase subunit H from Buchnera aphidicola subsp. Baizongia pistaciae (strain Bp).